Consider the following 590-residue polypeptide: DEAD-box ATP-dependent RNA helicase 27 (590 aa).

Positions 1–92 are disordered; sequence MAPAPATTSS…EKGNEGGSGI (92 aa). Over residues 27-62 the composition is skewed to acidic residues; that stretch reads SDSESEELSYDTAAADEEEGEEEAPNQMEELEEEQE. Positions 40–87 form a coiled coil; that stretch reads AADEEEGEEEAPNQMEELEEEQEEEKKEKKQKKEMSKEKKRKKEKGNE. The span at 63–76 shows a compositional bias: basic and acidic residues; sequence EEKKEKKQKKEMSK. The short motif at 96–124 is the Q motif element; the sequence is MLFSELGVSEPTARAIREMNYTYLTQIQA. Positions 127 to 302 constitute a Helicase ATP-binding domain; it reads IPHLLNGKDV…KLSFEKNEES (176 aa). Residue 140-147 participates in ATP binding; that stretch reads AKTGSGKT. Positions 250 to 253 match the DEAD box motif; it reads DEAD. The region spanning 335–488 is the Helicase C-terminal domain; that stretch reads RFLVLYAFLK…NKVPNLQSHL (154 aa). The interval 551–590 is disordered; sequence SASKHRRKMRKVDGGRRHGISAANPYGRKGGDDKRQFARF. Residues 579 to 590 show a composition bias toward basic and acidic residues; sequence KGGDDKRQFARF.

The protein belongs to the DEAD box helicase family. DDX18/HAS1 subfamily.

It carries out the reaction ATP + H2O = ADP + phosphate + H(+). The chain is DEAD-box ATP-dependent RNA helicase 27 from Oryza sativa subsp. japonica (Rice).